A 546-amino-acid chain; its full sequence is Amidase FG08078 (546 aa).

Active-site charge relay system residues include lysine 129 and serine 204. Serine 228 serves as the catalytic Acyl-ester intermediate.

It belongs to the amidase family.

The protein operates within mycotoxin biosynthesis. Functionally, amidase; part of the gene cluster that mediates the biosynthesis of butenolide, a mycotoxin that shows antibiotic activity but does not seem to play a major role in the spread of head blight in wheat. Butenolide is derived from glutamic acid via a 4-acetamido-2-butenoic acid intermediate. The predicted function of the NADH:flavin oxidoreductase FG08077, the cytochrome P450 monooxygenase FG08079, the decarboxylase FG08083, and the putative acetyltransferase FG08082 are consistent with this pathway, however, the respective activities of the butelonide biosynthesis cluster enzymes have still to be experimentally determined. This Gibberella zeae (strain ATCC MYA-4620 / CBS 123657 / FGSC 9075 / NRRL 31084 / PH-1) (Wheat head blight fungus) protein is Amidase FG08078.